We begin with the raw amino-acid sequence, 358 residues long: Putative glycylpeptide N-tetradecanoyltransferase (358 aa).

Belongs to the NMT family.

It carries out the reaction N-terminal glycyl-[protein] + tetradecanoyl-CoA = N-tetradecanoylglycyl-[protein] + CoA + H(+). Its function is as follows. Adds a myristoyl group to the N-terminal glycine residue of certain proteins. The protein is Putative glycylpeptide N-tetradecanoyltransferase of Acanthamoeba polyphaga (Amoeba).